Here is a 573-residue protein sequence, read N- to C-terminus: Probable D-xylulose kinase A (573 aa).

Substrate is bound by residues histidine 97, arginine 168, aspartate 284, and asparagine 285. ATP is bound by residues tryptophan 366, 471–472 (GG), and asparagine 475.

The protein belongs to the FGGY kinase family.

Its subcellular location is the cytoplasm. The catalysed reaction is D-xylulose + ATP = D-xylulose 5-phosphate + ADP + H(+). Its function is as follows. Highly specific D-xylulose kinase which participates in the catabolism of xylose. Xylose is a major component of hemicelluloses such as xylan. Most fungi utilize D-xylose via three enzymatic reactions, xylose reductase (XR), xylitol dehydrogenase (XDH), and xylulokinase, to form xylulose 5-phosphate, which enters pentose phosphate pathway. This is Probable D-xylulose kinase A (xkiA) from Aspergillus clavatus (strain ATCC 1007 / CBS 513.65 / DSM 816 / NCTC 3887 / NRRL 1 / QM 1276 / 107).